The primary structure comprises 76 residues: Small ribosomal subunit protein bS18 (76 aa).

Belongs to the bacterial ribosomal protein bS18 family. Part of the 30S ribosomal subunit. Forms a tight heterodimer with protein bS6.

Functionally, binds as a heterodimer with protein bS6 to the central domain of the 16S rRNA, where it helps stabilize the platform of the 30S subunit. This chain is Small ribosomal subunit protein bS18, found in Xylella fastidiosa (strain M23).